The primary structure comprises 103 residues: Co-chaperonin GroES (103 aa).

The protein belongs to the GroES chaperonin family. As to quaternary structure, heptamer of 7 subunits arranged in a ring. Interacts with the chaperonin GroEL.

It localises to the cytoplasm. Functionally, together with the chaperonin GroEL, plays an essential role in assisting protein folding. The GroEL-GroES system forms a nano-cage that allows encapsulation of the non-native substrate proteins and provides a physical environment optimized to promote and accelerate protein folding. GroES binds to the apical surface of the GroEL ring, thereby capping the opening of the GroEL channel. This is Co-chaperonin GroES from Prochlorococcus marinus (strain MIT 9313).